The following is a 148-amino-acid chain: Protein-arginine-phosphatase (148 aa).

Residue cysteine 9 is the Nucleophile of the active site. 10 to 15 (TGNTCR) is a substrate binding site. Residue arginine 15 is part of the active site. The Proton donor role is filled by aspartate 117.

It belongs to the low molecular weight phosphotyrosine protein phosphatase family. In terms of assembly, is present in solution as a mixture of monomers, dimers and higher order oligomers (trimers and tetramers).

The enzyme catalyses N(omega)-phospho-L-arginyl-[protein] + H2O = L-arginyl-[protein] + phosphate. Irreversibly inhibited by the synthetic inhibitor cyc-SeCN-amidine, which inactivates the enzyme by inducing disulfide bond formation between the two active site cysteine residues Cys-9 and Cys-14. In terms of biological role, catalyzes the specific dephosphorylation of phosphoarginine residues in proteins. Probably counteracts the protein arginine kinase McsB in vivo. Exhibits almost no activity against pTyr peptides. Protein arginine phosphorylation has a physiologically important role and is involved in the regulation of many critical cellular processes, such as protein homeostasis, motility, competence, and stringent and stress responses, by regulating gene expression and protein activity. This is Protein-arginine-phosphatase (ywle) from Geobacillus stearothermophilus (Bacillus stearothermophilus).